Reading from the N-terminus, the 692-residue chain is Elongation factor G 1 (692 aa).

Residues 8 to 283 (EKTRNIGIMA…SVVEYLPSPV (276 aa)) enclose the tr-type G domain. Residues 17 to 24 (AHIDAGKT), 81 to 85 (DTPGH), and 135 to 138 (NKMD) each bind GTP.

This sequence belongs to the TRAFAC class translation factor GTPase superfamily. Classic translation factor GTPase family. EF-G/EF-2 subfamily.

It localises to the cytoplasm. Catalyzes the GTP-dependent ribosomal translocation step during translation elongation. During this step, the ribosome changes from the pre-translocational (PRE) to the post-translocational (POST) state as the newly formed A-site-bound peptidyl-tRNA and P-site-bound deacylated tRNA move to the P and E sites, respectively. Catalyzes the coordinated movement of the two tRNA molecules, the mRNA and conformational changes in the ribosome. The protein is Elongation factor G 1 of Geobacter metallireducens (strain ATCC 53774 / DSM 7210 / GS-15).